A 462-amino-acid polypeptide reads, in one-letter code: Probable peptidoglycan glycosyltransferase FtsW (462 aa).

Residues Met1–Pro63 lie on the Cytoplasmic side of the membrane. Residues Leu64 to Val84 form a helical membrane-spanning segment. The Periplasmic portion of the chain corresponds to Tyr85 to Tyr97. Residues Leu98–Leu118 form a helical membrane-spanning segment. The Cytoplasmic portion of the chain corresponds to Cys119–Arg125. A helical membrane pass occupies residues Arg126–Gly146. Topologically, residues Arg147–Pro160 are periplasmic. The helical transmembrane segment at Leu161–Phe181 threads the bilayer. At Thr182–Arg227 the chain is on the cytoplasmic side. The next 2 membrane-spanning stretches (helical) occupy residues Ala228 to Asp248 and Phe249 to Pro269. Over Trp270–Lys271 the chain is Cytoplasmic. The chain crosses the membrane as a helical span at residues Tyr272–Pro292. The Periplasmic segment spans residues Tyr293–Asp348. A helical membrane pass occupies residues Phe349–Cys369. Topologically, residues Tyr370–Asp386 are cytoplasmic. The helical transmembrane segment at Leu387–Phe409 threads the bilayer. At Asn410–Thr424 the chain is on the periplasmic side. The helical transmembrane segment at Leu425–Leu445 threads the bilayer. The Cytoplasmic portion of the chain corresponds to Leu446–Glu462.

This sequence belongs to the SEDS family. FtsW subfamily.

The protein localises to the cell inner membrane. The catalysed reaction is [GlcNAc-(1-&gt;4)-Mur2Ac(oyl-L-Ala-gamma-D-Glu-L-Lys-D-Ala-D-Ala)](n)-di-trans,octa-cis-undecaprenyl diphosphate + beta-D-GlcNAc-(1-&gt;4)-Mur2Ac(oyl-L-Ala-gamma-D-Glu-L-Lys-D-Ala-D-Ala)-di-trans,octa-cis-undecaprenyl diphosphate = [GlcNAc-(1-&gt;4)-Mur2Ac(oyl-L-Ala-gamma-D-Glu-L-Lys-D-Ala-D-Ala)](n+1)-di-trans,octa-cis-undecaprenyl diphosphate + di-trans,octa-cis-undecaprenyl diphosphate + H(+). The protein operates within cell wall biogenesis; peptidoglycan biosynthesis. Its function is as follows. Peptidoglycan polymerase that is essential for cell division. The sequence is that of Probable peptidoglycan glycosyltransferase FtsW from Neisseria gonorrhoeae (strain NCCP11945).